We begin with the raw amino-acid sequence, 127 residues long: uncharacterized protein (127 aa).

A helical membrane pass occupies residues 85–107; it reads VYLGKIGFVLLHVFYLSCIAYYD.

Its subcellular location is the mitochondrion membrane. This is an uncharacterized protein from Dictyostelium discoideum (Social amoeba).